The following is a 346-amino-acid chain: Ribosomal RNA small subunit methyltransferase H (346 aa).

S-adenosyl-L-methionine is bound by residues 47 to 49 (GGY), Asp65, Phe92, Asp113, and Gln120. The segment at 294–346 (AVEPGSDEVAGNPRARSAKLRAAERTDAPAHPDGDLAGLLPADLSQRRGRRRS) is disordered. Over residues 314 to 327 (RAAERTDAPAHPDG) the composition is skewed to basic and acidic residues. Over residues 328-337 (DLAGLLPADL) the composition is skewed to low complexity.

This sequence belongs to the methyltransferase superfamily. RsmH family.

The protein resides in the cytoplasm. The catalysed reaction is cytidine(1402) in 16S rRNA + S-adenosyl-L-methionine = N(4)-methylcytidine(1402) in 16S rRNA + S-adenosyl-L-homocysteine + H(+). In terms of biological role, specifically methylates the N4 position of cytidine in position 1402 (C1402) of 16S rRNA. This is Ribosomal RNA small subunit methyltransferase H from Azorhizobium caulinodans (strain ATCC 43989 / DSM 5975 / JCM 20966 / LMG 6465 / NBRC 14845 / NCIMB 13405 / ORS 571).